Consider the following 271-residue polypeptide: Tryptophan synthase alpha chain (271 aa).

Residues glutamate 49 and aspartate 60 each act as proton acceptor in the active site.

This sequence belongs to the TrpA family. In terms of assembly, tetramer of two alpha and two beta chains.

It catalyses the reaction (1S,2R)-1-C-(indol-3-yl)glycerol 3-phosphate + L-serine = D-glyceraldehyde 3-phosphate + L-tryptophan + H2O. Its pathway is amino-acid biosynthesis; L-tryptophan biosynthesis; L-tryptophan from chorismate: step 5/5. Functionally, the alpha subunit is responsible for the aldol cleavage of indoleglycerol phosphate to indole and glyceraldehyde 3-phosphate. This chain is Tryptophan synthase alpha chain, found in Azoarcus sp. (strain BH72).